A 425-amino-acid polypeptide reads, in one-letter code: Decarboxylase flvG (425 aa).

The residue at position 82 (Lys82) is an N6-(pyridoxal phosphate)lysine. Residues Ser213, Gly250, and 281-284 each bind pyridoxal 5'-phosphate; that span reads EPGR. 331 to 332 lines the substrate pocket; the sequence is FE. Catalysis depends on Cys365, which acts as the Proton donor; shared with dimeric partner. Position 366 (Asp366) interacts with substrate. Residue Tyr395 coordinates pyridoxal 5'-phosphate.

The protein belongs to the Orn/Lys/Arg decarboxylase class-II family. In terms of assembly, homodimer. Only the dimer is catalytically active, as the active sites are constructed of residues from both monomers. It depends on pyridoxal 5'-phosphate as a cofactor.

It localises to the cytoplasm. It carries out the reaction N(6),N(6)-dimethyl-L-lysine + H(+) = N,N-dimethyl-cadaverine + CO2. Its pathway is secondary metabolite biosynthesis; terpenoid biosynthesis. In terms of biological role, decarboxylase; part of the gene cluster that mediates the biosynthesis of flavunoidine, an alkaloidal terpenoid with a tetracyclic cage-like core connected to dimethylcadaverine via a C-N bond and acylated with 5,5-dimethyl-L-pipecolate. The tetracyclic core is synthesized by the terpene cyclase flvE and the cytochrome P450 monooxygenase flvD. The terpene cyclase flvE catalyzes the cyclization of farnesyl pyrophosphate (FPP) to form (1R,4R,5S)-(+)-acoradiene and the cytochrome P450 monooxygenase flvD is then responsible for oxidative conversion of (1R,4R,5S)-(+)-acoradiene into the tetracyclic cage present in the final product flavunoidine. In parallel, the N-methyltransferase flvH dimethylates L-lysine to give N,N-dimethyl-L-Lysin which is decarboxylated by flvG to afford dimethylcadaverine. The terpene cyclase-like protein flvF is the enzyme that attaches the dimethylcadaverine precusor at the C-7 of the tetracyclic cage to yield pre-flavunoidine. The cytochrome monooxygenase flvC hydroxylates the C-10 position of pre-flavunoidine whereas the NRPS flvI acylates the terpenoid core at the hydroxylated C-10 with dimethylpipecolate to yield final flavunoidine. The bifunctional enzyme flvA and the dehydrogenase flvB are responsible for the synthesis of the dimethylpipecolate precursor. The PLP-dependent lyase domain of flvA might use L-O-acetyl-homoserine and alpha-keto-isovalerate to form an intermediary ketone that can cyclize intramolecularly to yield an imine. The imine can be reduced by flvB to yield the 6-carboxylated pipecolate. The C-terminal alpha-KG-dependent oxygenase domain of flvA is then proposed to catalyze the decarboxylation to yield dimethylpipecolate. In Aspergillus flavus (strain ATCC 200026 / FGSC A1120 / IAM 13836 / NRRL 3357 / JCM 12722 / SRRC 167), this protein is Decarboxylase flvG.